The chain runs to 89 residues: Cell division topological specificity factor (89 aa).

This sequence belongs to the MinE family.

In terms of biological role, prevents the cell division inhibition by proteins MinC and MinD at internal division sites while permitting inhibition at polar sites. This ensures cell division at the proper site by restricting the formation of a division septum at the midpoint of the long axis of the cell. The protein is Cell division topological specificity factor of Janthinobacterium sp. (strain Marseille) (Minibacterium massiliensis).